The sequence spans 110 residues: UPF0122 protein SAR1212 (110 aa).

It belongs to the UPF0122 family.

Functionally, might take part in the signal recognition particle (SRP) pathway. This is inferred from the conservation of its genetic proximity to ftsY/ffh. May be a regulatory protein. This is UPF0122 protein SAR1212 from Staphylococcus aureus (strain MRSA252).